Consider the following 347-residue polypeptide: DNA-directed RNA polymerase subunit alpha (347 aa).

The interval 1 to 243 (MLIKQGDRLI…DQISVFINFD (243 aa)) is alpha N-terminal domain (alpha-NTD). The alpha C-terminal domain (alpha-CTD) stretch occupies residues 260–347 (FNEHLFKSID…EWKRKQQHEA (88 aa)).

This sequence belongs to the RNA polymerase alpha chain family. In terms of assembly, homodimer. The RNAP catalytic core consists of 2 alpha, 1 beta, 1 beta' and 1 omega subunit. When a sigma factor is associated with the core the holoenzyme is formed, which can initiate transcription.

The enzyme catalyses RNA(n) + a ribonucleoside 5'-triphosphate = RNA(n+1) + diphosphate. Functionally, DNA-dependent RNA polymerase catalyzes the transcription of DNA into RNA using the four ribonucleoside triphosphates as substrates. The sequence is that of DNA-directed RNA polymerase subunit alpha from Nitratidesulfovibrio vulgaris (strain ATCC 29579 / DSM 644 / CCUG 34227 / NCIMB 8303 / VKM B-1760 / Hildenborough) (Desulfovibrio vulgaris).